Here is a 385-residue protein sequence, read N- to C-terminus: Glucans biosynthesis protein C (385 aa).

Transmembrane regions (helical) follow at residues 17-37 (AWLM…SHTW), 60-80 (MQVF…RYPL), 91-111 (VGIP…IMLQ), 137-157 (ISHL…VWIF), 173-193 (KFSM…YAVI), 212-232 (FIVM…LAFI), 239-259 (LFTT…VAYL), 274-294 (TESV…FSFG), 311-331 (ASLF…AYIT), and 338-358 (WLGF…LYEI).

The protein belongs to the acyltransferase 3 family. OpgC subfamily.

The protein localises to the cell membrane. It functions in the pathway glycan metabolism; osmoregulated periplasmic glucan (OPG) biosynthesis. In terms of biological role, necessary for the succinyl substitution of periplasmic glucans. Could catalyze the transfer of succinyl residues from the cytoplasmic side of the membrane to the nascent glucan backbones on the periplasmic side of the membrane. The polypeptide is Glucans biosynthesis protein C (Escherichia coli (strain SMS-3-5 / SECEC)).